The chain runs to 182 residues: Isopentenyl-diphosphate Delta-isomerase (182 aa).

The Mn(2+) site is built by histidine 25 and histidine 32. The Nudix hydrolase domain maps to 30–164 (LLHLAFSSWL…PWAFSPWMVM (135 aa)). Residue cysteine 67 is part of the active site. Histidine 69 serves as a coordination point for Mn(2+). Glutamate 87 serves as a coordination point for Mg(2+). The Mn(2+) site is built by glutamate 114 and glutamate 116. The active site involves glutamate 116.

It belongs to the IPP isomerase type 1 family. In terms of assembly, homodimer. The cofactor is Mg(2+). Mn(2+) serves as cofactor.

The protein localises to the cytoplasm. It carries out the reaction isopentenyl diphosphate = dimethylallyl diphosphate. It functions in the pathway isoprenoid biosynthesis; dimethylallyl diphosphate biosynthesis; dimethylallyl diphosphate from isopentenyl diphosphate: step 1/1. In terms of biological role, catalyzes the 1,3-allylic rearrangement of the homoallylic substrate isopentenyl (IPP) to its highly electrophilic allylic isomer, dimethylallyl diphosphate (DMAPP). This Escherichia coli O45:K1 (strain S88 / ExPEC) protein is Isopentenyl-diphosphate Delta-isomerase.